Reading from the N-terminus, the 902-residue chain is DNA mismatch repair protein MutS (902 aa).

An ATP-binding site is contributed by 647–654 (GPNMGGKS).

This sequence belongs to the DNA mismatch repair MutS family.

Functionally, this protein is involved in the repair of mismatches in DNA. It is possible that it carries out the mismatch recognition step. This protein has a weak ATPase activity. The protein is DNA mismatch repair protein MutS of Nitrosospira multiformis (strain ATCC 25196 / NCIMB 11849 / C 71).